A 242-amino-acid polypeptide reads, in one-letter code: Probable ABC transporter ATP-binding protein PEB1C (242 aa).

Positions 2–236 constitute an ABC transporter domain; that stretch reads IELKNVNKYY…PKTERARLFL (235 aa). 34-41 contacts ATP; that stretch reads GPSGSGKS.

It belongs to the ABC transporter superfamily.

The protein resides in the cell inner membrane. Most probably involved, with PEB1, in a binding-protein-dependent transport system for an amino acid. Probably responsible for energy coupling to the transport system. In Campylobacter jejuni subsp. jejuni serotype O:2 (strain ATCC 700819 / NCTC 11168), this protein is Probable ABC transporter ATP-binding protein PEB1C (peb1C).